A 37-amino-acid polypeptide reads, in one-letter code: Large ribosomal subunit protein bL36c (37 aa).

Belongs to the bacterial ribosomal protein bL36 family.

The protein resides in the plastid. Its subcellular location is the chloroplast. This is Large ribosomal subunit protein bL36c from Vitis vinifera (Grape).